The primary structure comprises 84 residues: MRQIFNRVKWSGRRAYFWFISRGSPGGEEVLSTDDVVEVGANGVVVSVGGRERYIPYHRIVEIRLESGEVLLSRRGGREPSGGL.

The protein belongs to the UPF0248 family.

This is UPF0248 protein Pisl_1919 from Pyrobaculum islandicum (strain DSM 4184 / JCM 9189 / GEO3).